Here is a 501-residue protein sequence, read N- to C-terminus: Cell division control protein 24 (501 aa).

As to quaternary structure, interacts with dna2, pcn1 and rfc1.

The protein localises to the nucleus. It localises to the cytoplasm. Has a role in the progression of DNA replication and in the maintenance of genomic integrity. Acts during S phase, after initiation, where it is essential for completion. This chain is Cell division control protein 24 (cdc24), found in Schizosaccharomyces pombe (strain 972 / ATCC 24843) (Fission yeast).